Here is a 2211-residue protein sequence, read N- to C-terminus: Orsellinic acid synthase (2211 aa).

An N-terminal acylcarrier protein transacylase domain (SAT) region spans residues 44-246 (TFREQVSDAI…TVAVVHSLYH (203 aa)). A Ketosynthase family 3 (KS3) domain is found at 380–805 (WDDIAIVGMA…GSNAAVIIGE (426 aa)). Active-site for beta-ketoacyl synthase activity residues include C549, H684, and H724. The malonyl-CoA:ACP transacylase (MAT) domain stretch occupies residues 910 to 1228 (VFIFSGQGSQ…QLTTLKKNVP (319 aa)). S1006 functions as the For acyl/malonyl transferase activity in the catalytic mechanism. The tract at residues 1309–1440 (HAIQKLSHGA…GVVKQSNMAS (132 aa)) is N-terminal hotdog fold. The PKS/mFAS DH domain occupies 1309-1629 (HAIQKLSHGA…FQHVKIPLIE (321 aa)). The interval 1334–1573 (EFIEGHLVCG…GATTLRAPVV (240 aa)) is product template (PT) domain. The Proton acceptor; for dehydratase activity role is filled by H1339. Positions 1473–1629 (VQVFSKRAMY…FQHVKIPLIE (157 aa)) are C-terminal hotdog fold. D1537 (proton donor; for dehydratase activity) is an active-site residue. 2 consecutive Carrier domains span residues 1681–1755 (AAPE…EALS) and 1787–1865 (STVD…VKRP). S1715 is subject to O-(pantetheine 4'-phosphoryl)serine. A disordered region spans residues 1755 to 1786 (SPTPVGNDVDNDSPTPGSERGSDSAISTPASV). O-(pantetheine 4'-phosphoryl)serine is present on S1824. Residues 1937–2204 (SGKSPLFLIH…AAVSAALVDA (268 aa)) form a thioesterase (TE) domain region.

The catalysed reaction is 3 malonyl-CoA + acetyl-CoA + 2 H(+) = orsellinate + 3 CO2 + 4 CoA. The protein operates within secondary metabolite biosynthesis. Functionally, non-reducing polyketide synthase; part of the gene cluster that mediates the biosynthesis of the bibenzoquinone oosporein, a metabolite required for fungal virulence that acts by evading host immunity to facilitate fungal multiplication in insects. The non-reducing polyketide synthase OpS1 produces orsellinic acid by condensing acetyl-CoA with 3 malonyl-CoA units. Orsellinic acid is then hydroxylated to benzenetriol by the hydroxylase OpS4. The intermediate is oxidized either nonenzymatically to 5,5'-dideoxy-oosporein or enzymatically to benzenetetrol by the oxidoreductase OpS7. The latter is further dimerized to oosporein by the catalase OpS5. OpS6 probably functions en route for protecting cells against oxidative stress by scavenging any leaked free radical form of benzenetetrol by activating the thiol group of glutathione. This Beauveria bassiana (strain ARSEF 2860) (White muscardine disease fungus) protein is Orsellinic acid synthase.